Here is a 661-residue protein sequence, read N- to C-terminus: B3 domain-containing protein Os12g0591400 (661 aa).

DNA-binding regions (TF-B3) lie at residues glycine 2–serine 95, lysine 197–serine 290, leucine 437–serine 535, and threonine 562–glycine 658.

It is found in the nucleus. This Oryza sativa subsp. japonica (Rice) protein is B3 domain-containing protein Os12g0591400.